Consider the following 379-residue polypeptide: Alcohol dehydrogenase class-3 (379 aa).

Ala-2 carries the post-translational modification N-acetylalanine. Cys-47 contacts Zn(2+). His-48 provides a ligand contact to NAD(+). Residues Thr-49 and His-69 each coordinate an alcohol. Positions 69, 70, 99, 102, 105, 113, and 177 each coordinate Zn(2+). Residues 202 to 207 (GLGTVG), Asp-226, Lys-231, Ile-272, 295 to 297 (VGV), 320 to 322 (TAF), and Arg-372 contribute to the NAD(+) site.

The protein belongs to the zinc-containing alcohol dehydrogenase family. Class-III subfamily. In terms of assembly, homodimer. Requires Zn(2+) as cofactor. In terms of tissue distribution, ubiquitous.

The protein localises to the cytoplasm. It carries out the reaction a primary alcohol + NAD(+) = an aldehyde + NADH + H(+). The catalysed reaction is a secondary alcohol + NAD(+) = a ketone + NADH + H(+). The enzyme catalyses S-(hydroxymethyl)glutathione + NADP(+) = S-formylglutathione + NADPH + H(+). It catalyses the reaction S-(hydroxymethyl)glutathione + NAD(+) = S-formylglutathione + NADH + H(+). It carries out the reaction S-nitrosoglutathione + NADH + H(+) = S-(hydroxysulfenamide)glutathione + NAD(+). With respect to regulation, repressed by thiol-modifying agents N-ethylmaleimide (NEM) and 5,5-dithio-bis-(2-nitrobenzoic acid) (DTNB), as well as by methyl methanethiosulfonate (MMTS) in a dose-dependent manner. Inhibited by hydrogen peroxide H(2)O(2). Its function is as follows. Alcohol dehydrogenase catalyzing the reduction of nitrosoglutathione. Can also use long-chain alcohols including cinnamyl alcohol and geraniol, and, to a lower extent, octanol. Plays a central role in formaldehyde detoxification. Not able to use ethanol (EtOH) as substrate. This Arabidopsis thaliana (Mouse-ear cress) protein is Alcohol dehydrogenase class-3.